The chain runs to 509 residues: ATP synthase subunit alpha 1 (509 aa).

172-179 (GDRQTGKT) is a binding site for ATP.

This sequence belongs to the ATPase alpha/beta chains family. F-type ATPases have 2 components, CF(1) - the catalytic core - and CF(0) - the membrane proton channel. CF(1) has five subunits: alpha(3), beta(3), gamma(1), delta(1), epsilon(1). CF(0) has four main subunits: a(1), b(1), b'(1) and c(9-12).

It localises to the cell inner membrane. It carries out the reaction ATP + H2O + 4 H(+)(in) = ADP + phosphate + 5 H(+)(out). Produces ATP from ADP in the presence of a proton gradient across the membrane. The alpha chain is a regulatory subunit. This Dinoroseobacter shibae (strain DSM 16493 / NCIMB 14021 / DFL 12) protein is ATP synthase subunit alpha 1.